Here is a 679-residue protein sequence, read N- to C-terminus: UvrABC system protein B (679 aa).

The Helicase ATP-binding domain maps to 25–412; sequence QGVNSGEEFQ…EGKFIEQVIR (388 aa). ATP is bound at residue 38–45; the sequence is GATGTGKT. Positions 91–114 match the Beta-hairpin motif; it reads YYDYYQPEAYVPVSDTYIAKTASI. The region spanning 429 to 583 is the Helicase C-terminal domain; that stretch reads QIDDLLSEIR…KKYNQINGIT (155 aa). In terms of domain architecture, UVR spans 639-674; that stretch reads PSLIDKLENKMKDAAKELNFEEAANLRDRIKKLRQK.

The protein belongs to the UvrB family. In terms of assembly, forms a heterotetramer with UvrA during the search for lesions. Interacts with UvrC in an incision complex.

It is found in the cytoplasm. In terms of biological role, the UvrABC repair system catalyzes the recognition and processing of DNA lesions. A damage recognition complex composed of 2 UvrA and 2 UvrB subunits scans DNA for abnormalities. Upon binding of the UvrA(2)B(2) complex to a putative damaged site, the DNA wraps around one UvrB monomer. DNA wrap is dependent on ATP binding by UvrB and probably causes local melting of the DNA helix, facilitating insertion of UvrB beta-hairpin between the DNA strands. Then UvrB probes one DNA strand for the presence of a lesion. If a lesion is found the UvrA subunits dissociate and the UvrB-DNA preincision complex is formed. This complex is subsequently bound by UvrC and the second UvrB is released. If no lesion is found, the DNA wraps around the other UvrB subunit that will check the other stand for damage. The chain is UvrABC system protein B from Prochlorococcus marinus subsp. pastoris (strain CCMP1986 / NIES-2087 / MED4).